The primary structure comprises 202 residues: UPF0102 protein Dde_1093 (202 aa).

This sequence belongs to the UPF0102 family.

This chain is UPF0102 protein Dde_1093, found in Oleidesulfovibrio alaskensis (strain ATCC BAA-1058 / DSM 17464 / G20) (Desulfovibrio alaskensis).